The sequence spans 68 residues: Large ribosomal subunit protein bL31 (68 aa).

Positions 16, 18, 37, and 40 each coordinate Zn(2+).

The protein belongs to the bacterial ribosomal protein bL31 family. Type A subfamily. As to quaternary structure, part of the 50S ribosomal subunit. Requires Zn(2+) as cofactor.

In terms of biological role, binds the 23S rRNA. The sequence is that of Large ribosomal subunit protein bL31 from Aquifex aeolicus (strain VF5).